Reading from the N-terminus, the 182-residue chain is Ribosome-recycling factor (182 aa).

Belongs to the RRF family.

It localises to the cytoplasm. In terms of biological role, responsible for the release of ribosomes from messenger RNA at the termination of protein biosynthesis. May increase the efficiency of translation by recycling ribosomes from one round of translation to another. This is Ribosome-recycling factor from Nostoc punctiforme (strain ATCC 29133 / PCC 73102).